We begin with the raw amino-acid sequence, 86 residues long: Large ribosomal subunit protein uL23 (86 aa).

It belongs to the universal ribosomal protein uL23 family. In terms of assembly, part of the 50S ribosomal subunit. Contacts protein L29.

Its function is as follows. Binds to 23S rRNA. One of the proteins that surrounds the polypeptide exit tunnel on the outside of the ribosome. The polypeptide is Large ribosomal subunit protein uL23 (Pyrococcus horikoshii (strain ATCC 700860 / DSM 12428 / JCM 9974 / NBRC 100139 / OT-3)).